The sequence spans 330 residues: Aspartate--ammonia ligase (330 aa).

It belongs to the class-II aminoacyl-tRNA synthetase family. AsnA subfamily.

The protein localises to the cytoplasm. The catalysed reaction is L-aspartate + NH4(+) + ATP = L-asparagine + AMP + diphosphate + H(+). The protein operates within amino-acid biosynthesis; L-asparagine biosynthesis; L-asparagine from L-aspartate (ammonia route): step 1/1. The chain is Aspartate--ammonia ligase from Streptococcus thermophilus (strain ATCC BAA-250 / LMG 18311).